A 311-amino-acid polypeptide reads, in one-letter code: DNA-directed RNA polymerase subunit alpha (311 aa).

Residues 1–227 are alpha N-terminal domain (alpha-NTD); the sequence is MNNISIKCLK…DLFTLLINNK (227 aa). Residues 242–311 form an alpha C-terminal domain (alpha-CTD) region; sequence ISIEPYTNIA…LKNKLGIILK (70 aa).

Belongs to the RNA polymerase alpha chain family. As to quaternary structure, in plastids the minimal PEP RNA polymerase catalytic core is composed of four subunits: alpha, beta, beta', and beta''. When a (nuclear-encoded) sigma factor is associated with the core the holoenzyme is formed, which can initiate transcription.

It localises to the plastid. Its subcellular location is the chloroplast. It catalyses the reaction RNA(n) + a ribonucleoside 5'-triphosphate = RNA(n+1) + diphosphate. Its function is as follows. DNA-dependent RNA polymerase catalyzes the transcription of DNA into RNA using the four ribonucleoside triphosphates as substrates. The polypeptide is DNA-directed RNA polymerase subunit alpha (Phaeodactylum tricornutum (strain CCAP 1055/1)).